The following is a 183-amino-acid chain: Der GTPase-activating protein YihI (183 aa).

The interval 1–101 (MSRSKKTRKG…KLTDEQKLLK (101 aa)) is disordered. 2 stretches are compositionally biased toward basic and acidic residues: residues 22-46 (KKQD…RHNE) and 92-101 (KLTDEQKLLK).

This sequence belongs to the YihI family. As to quaternary structure, interacts with Der.

A GTPase-activating protein (GAP) that modifies Der/EngA GTPase function. May play a role in ribosome biogenesis. The protein is Der GTPase-activating protein YihI of Shewanella oneidensis (strain ATCC 700550 / JCM 31522 / CIP 106686 / LMG 19005 / NCIMB 14063 / MR-1).